The following is a 333-amino-acid chain: Glycerol-3-phosphate dehydrogenase [NAD(P)+] 2 (333 aa).

Positions 12, 13, 32, and 106 each coordinate NADPH. Lys-106 and Gly-134 together coordinate sn-glycerol 3-phosphate. NADPH is bound at residue Ala-138. Residues Lys-189, Asp-242, Ser-252, Arg-253, and Asn-254 each contribute to the sn-glycerol 3-phosphate site. The active-site Proton acceptor is the Lys-189. Arg-253 is an NADPH binding site. Residues Val-277 and Glu-279 each coordinate NADPH.

The protein belongs to the NAD-dependent glycerol-3-phosphate dehydrogenase family.

It is found in the cytoplasm. It carries out the reaction sn-glycerol 3-phosphate + NAD(+) = dihydroxyacetone phosphate + NADH + H(+). The enzyme catalyses sn-glycerol 3-phosphate + NADP(+) = dihydroxyacetone phosphate + NADPH + H(+). It functions in the pathway membrane lipid metabolism; glycerophospholipid metabolism. Catalyzes the reduction of the glycolytic intermediate dihydroxyacetone phosphate (DHAP) to sn-glycerol 3-phosphate (G3P), the key precursor for phospholipid synthesis. The polypeptide is Glycerol-3-phosphate dehydrogenase [NAD(P)+] 2 (Sphingopyxis alaskensis (strain DSM 13593 / LMG 18877 / RB2256) (Sphingomonas alaskensis)).